A 443-amino-acid polypeptide reads, in one-letter code: Threonine/serine transporter TdcC (443 aa).

The next 11 membrane-spanning stretches (helical) occupy residues 22–42 (TTWT…FFPI), 44–64 (AGFG…PIAF), 97–117 (GVVI…IYGV), 140–160 (FVAL…KDLM), 163–183 (VMSY…LSLI), 207–227 (ILIT…FSPI), 261–281 (MLMV…LSPA), 311–331 (FAIT…FKSF), 366–386 (LSMI…PNIL), 389–409 (IEAM…MYAI), and 423–443 (DNVF…YKLF).

Belongs to the amino acid/polyamine transporter 2 family. SdaC/TdcC subfamily.

Its subcellular location is the cell inner membrane. The enzyme catalyses L-threonine(in) + H(+)(in) = L-threonine(out) + H(+)(out). The catalysed reaction is L-serine(in) + H(+)(in) = L-serine(out) + H(+)(out). In terms of biological role, involved in the import of threonine and serine into the cell, with the concomitant import of a proton (symport system). In Shigella flexneri serotype 5b (strain 8401), this protein is Threonine/serine transporter TdcC.